The sequence spans 697 residues: Serotransferrin (697 aa).

The first 19 residues, Met-1–Ala-19, serve as a signal peptide directing secretion. 2 Transferrin-like domains span residues Val-25–Glu-347 and Val-360–Lys-682. Cystine bridges form between Cys-28–Cys-67 and Cys-38–Cys-58. Arg-42 carries the dimethylated arginine modification. Fe(3+) contacts are provided by Asp-82 and Tyr-114. 8 disulfides stabilise this stretch: Cys-137/Cys-213, Cys-156/Cys-350, Cys-177/Cys-193, Cys-180/Cys-196, Cys-190/Cys-198, Cys-246/Cys-260, Cys-363/Cys-395, and Cys-373/Cys-386. Thr-139, Arg-143, Ala-145, and Gly-146 together coordinate hydrogencarbonate. A Fe(3+)-binding site is contributed by Tyr-207. His-268 provides a ligand contact to Fe(3+). Position 388 is a phosphoserine (Ser-388). Residues Asp-410 and Tyr-448 each coordinate Fe(3+). Cystine bridges form between Cys-420–Cys-692, Cys-435–Cys-655, Cys-472–Cys-543, Cys-496–Cys-683, Cys-506–Cys-520, Cys-517–Cys-526, Cys-583–Cys-597, and Cys-633–Cys-638. Residues Thr-474, Arg-478, Ala-480, and Gly-481 each contribute to the hydrogencarbonate site. The N-linked (GlcNAc...) asparagine glycan is linked to Asn-513. Residue Tyr-537 coordinates Fe(3+). His-605 serves as a coordination point for Fe(3+). Ser-684 bears the Phosphoserine mark.

The protein belongs to the transferrin family. As to quaternary structure, monomer. Part of a complex composed of SLC40A1/ferroportin, TF/transferrin and HEPH/hephaestin that transfers iron from cells to transferrin. In terms of tissue distribution, expressed by the liver and secreted in plasma.

Its subcellular location is the secreted. Transferrins are iron binding transport proteins which can bind two Fe(3+) ions in association with the binding of an anion, usually bicarbonate. It is responsible for the transport of iron from sites of absorption and heme degradation to those of storage and utilization. Serum transferrin may also have a further role in stimulating cell proliferation. This chain is Serotransferrin (Tf), found in Mus musculus (Mouse).